The chain runs to 536 residues: T-complex protein 1 subunit delta (536 aa).

The tract at residues 1-21 (MAAVAAPMASKPRGSKAESFV) is disordered.

This sequence belongs to the TCP-1 chaperonin family. As to quaternary structure, heterooligomeric complex of about 850 to 900 kDa that forms two stacked rings, 12 to 16 nm in diameter.

Its subcellular location is the cytoplasm. In terms of biological role, molecular chaperone; assists the folding of proteins upon ATP hydrolysis. Known to play a role, in vitro, in the folding of actin and tubulin. This chain is T-complex protein 1 subunit delta, found in Arabidopsis thaliana (Mouse-ear cress).